A 444-amino-acid polypeptide reads, in one-letter code: MREIVHLQAGQCGNQIGAKFWEVISDEHGIDPTGTYHGDSDLQLERINVYYNEATGGNYVPRAVLVDLEPGTMDSVRSGPFGQIFRPDNFVFGQSGAGNNWAKGHYTEGAELVDAVLDVVRKEAESCDCLQGFQLTHSLGGGTGSGMGTLLISKIREEFPDRIMNTFSVVPSPKVSDTVVEPYNATLSVHQLVENTDETYCIDNEALYDICFRTLKLTTPTYGDLNHLVSATMSGVTTCLRFPGQLNADLRKLAVNMVPFPRLHFFMPGFAPLTSRGSQQYRALTVPELTQQMFDAKNMMAACDPRHGRYLTVAAVFRGRMSMKEVDEQMLSVQSKNSSYFVEWIPNNVKTAVCDIPPRGLKMAATFIGNSTAIQELFKRISEQFTAMFRRKAFLHWYTGEGMDEMEFTEAESNMNDLVSEYQQYQDATAEEGEFEEEAEEEVA.

Positions 1 to 4 (MREI) match the MREI motif motif. 6 residues coordinate GTP: Gln-11, Glu-69, Ser-138, Gly-142, Thr-143, and Gly-144. Residue Glu-69 coordinates Mg(2+). Ser-172 carries the phosphoserine; by CDK1 modification. GTP contacts are provided by Asn-204 and Asn-226. At Glu-436 the chain carries 5-glutamyl polyglutamate.

Belongs to the tubulin family. In terms of assembly, dimer of alpha and beta chains. A typical microtubule is a hollow water-filled tube with an outer diameter of 25 nm and an inner diameter of 15 nM. Alpha-beta heterodimers associate head-to-tail to form protofilaments running lengthwise along the microtubule wall with the beta-tubulin subunit facing the microtubule plus end conferring a structural polarity. Microtubules usually have 13 protofilaments but different protofilament numbers can be found in some organisms and specialized cells. It depends on Mg(2+) as a cofactor. Some glutamate residues at the C-terminus are polyglycylated, resulting in polyglycine chains on the gamma-carboxyl group. Glycylation is mainly limited to tubulin incorporated into axonemes (cilia and flagella) whereas glutamylation is prevalent in neuronal cells, centrioles, axonemes, and the mitotic spindle. Both modifications can coexist on the same protein on adjacent residues, and lowering polyglycylation levels increases polyglutamylation, and reciprocally. Cilia and flagella glycylation is required for their stability and maintenance. Flagella glycylation controls sperm motility. Post-translationally, some glutamate residues at the C-terminus are polyglutamylated, resulting in polyglutamate chains on the gamma-carboxyl group. Polyglutamylation plays a key role in microtubule severing by spastin (SPAST). SPAST preferentially recognizes and acts on microtubules decorated with short polyglutamate tails: severing activity by SPAST increases as the number of glutamates per tubulin rises from one to eight, but decreases beyond this glutamylation threshold. Glutamylation is also involved in cilia motility. In terms of processing, phosphorylated on Ser-172 by CDK1 during the cell cycle, from metaphase to telophase, but not in interphase. This phosphorylation inhibits tubulin incorporation into microtubules.

Its subcellular location is the cytoplasm. It is found in the cytoskeleton. Functionally, tubulin is the major constituent of microtubules, a cylinder consisting of laterally associated linear protofilaments composed of alpha- and beta-tubulin heterodimers. Microtubules grow by the addition of GTP-tubulin dimers to the microtubule end, where a stabilizing cap forms. Below the cap, tubulin dimers are in GDP-bound state, owing to GTPase activity of alpha-tubulin. In Bos taurus (Bovine), this protein is Tubulin beta-4A chain (TUBB4A).